A 249-amino-acid chain; its full sequence is Probable transcriptional regulatory protein Rru_A1086 (249 aa).

It belongs to the TACO1 family.

It is found in the cytoplasm. This Rhodospirillum rubrum (strain ATCC 11170 / ATH 1.1.1 / DSM 467 / LMG 4362 / NCIMB 8255 / S1) protein is Probable transcriptional regulatory protein Rru_A1086.